The following is a 282-amino-acid chain: Pantothenate synthetase (282 aa).

30–37 serves as a coordination point for ATP; that stretch reads MGYLHEGH. Histidine 37 serves as the catalytic Proton donor. Residue glutamine 61 coordinates (R)-pantoate. Glutamine 61 serves as a coordination point for beta-alanine. 147–150 contacts ATP; it reads GMKD. Residue glutamine 153 participates in (R)-pantoate binding. ATP contacts are provided by residues valine 176 and 184-187; that span reads KSSR.

It belongs to the pantothenate synthetase family. In terms of assembly, homodimer.

Its subcellular location is the cytoplasm. The enzyme catalyses (R)-pantoate + beta-alanine + ATP = (R)-pantothenate + AMP + diphosphate + H(+). The protein operates within cofactor biosynthesis; (R)-pantothenate biosynthesis; (R)-pantothenate from (R)-pantoate and beta-alanine: step 1/1. Functionally, catalyzes the condensation of pantoate with beta-alanine in an ATP-dependent reaction via a pantoyl-adenylate intermediate. This Bacillus mycoides (strain KBAB4) (Bacillus weihenstephanensis) protein is Pantothenate synthetase.